A 340-amino-acid polypeptide reads, in one-letter code: MLEAPGPSDGCELSNPSASRVSCAGQMLEVQPGLYFGGAAAVAEPDHLREAGITAVLTVDSEEPSFKAGPGVEDLWRLFVPALDKPETDLLSHLDRCVAFIGQARAEGRAVLVHCHAGVSRSVAIITAFLMKTDQLPFEKAYEKLQILKPEAKMNEGFEWQLKLYQAMGYEVDTSSAIYKQYRLQKVTEKYPELQNLPQELFAVDPTTVSQGLKDEVLYKCRKCRRSLFRSSSILDHREGSGPIAFAHKRMTPSSMLTTGRQAQCTSYFIEPVQWMESALLGVMDGQLLCPKCSAKLGSFNWYGEQCSCGRWITPAFQIHKNRVDEMKILPVLGSQTGKI.

The residue at position 1 (Met1) is an N-acetylmethionine. In terms of domain architecture, Tyrosine-protein phosphatase spans 26 to 171 (QMLEVQPGLY…LKLYQAMGYE (146 aa)). Residue Cys115 is the Phosphocysteine intermediate of the active site. 116–121 (HAGVSR) is a substrate binding site. Ser335 is subject to Phosphoserine.

This sequence belongs to the protein-tyrosine phosphatase family. Non-receptor class dual specificity subfamily. As to quaternary structure, monomer. The cofactor is Zn(2+). In terms of tissue distribution, ubiquitous, highest expression in spleen, testis, ovary, and peripheral blood leukocytes and lower expression in liver and lung.

The protein resides in the nucleus. The protein localises to the cytoplasm. It localises to the cytosol. The enzyme catalyses O-phospho-L-tyrosyl-[protein] + H2O = L-tyrosyl-[protein] + phosphate. It carries out the reaction O-phospho-L-seryl-[protein] + H2O = L-seryl-[protein] + phosphate. It catalyses the reaction O-phospho-L-threonyl-[protein] + H2O = L-threonyl-[protein] + phosphate. Its function is as follows. Dual specificity phosphatase; can dephosphorylate both phosphotyrosine and phosphoserine or phosphothreonine residues. Can dephosphorylate glucokinase (in vitro). Has phosphatase activity with the synthetic substrate 6,8-difluoro-4-methylumbelliferyl phosphate and other in vitro substrates. This is Dual specificity protein phosphatase 12 (DUSP12) from Homo sapiens (Human).